We begin with the raw amino-acid sequence, 348 residues long: Large ribosomal subunit protein uL3m (348 aa).

The N-terminal 40 residues, 1–40 (MPGWRLLAQAGARVLGCGARGLGADPGLERRKNILFFVRN), are a transit peptide targeting the mitochondrion.

This sequence belongs to the universal ribosomal protein uL3 family. Component of the mitochondrial ribosome large subunit (39S) which comprises a 16S rRNA and about 50 distinct proteins.

It localises to the mitochondrion. This is Large ribosomal subunit protein uL3m (Mrpl3) from Mus musculus (Mouse).